A 390-amino-acid polypeptide reads, in one-letter code: Lipid-A-disaccharide synthase (390 aa).

This sequence belongs to the LpxB family.

It carries out the reaction a lipid X + a UDP-2-N,3-O-bis[(3R)-3-hydroxyacyl]-alpha-D-glucosamine = a lipid A disaccharide + UDP + H(+). It functions in the pathway bacterial outer membrane biogenesis; LPS lipid A biosynthesis. Functionally, condensation of UDP-2,3-diacylglucosamine and 2,3-diacylglucosamine-1-phosphate to form lipid A disaccharide, a precursor of lipid A, a phosphorylated glycolipid that anchors the lipopolysaccharide to the outer membrane of the cell. The polypeptide is Lipid-A-disaccharide synthase (Rickettsia felis (strain ATCC VR-1525 / URRWXCal2) (Rickettsia azadi)).